The primary structure comprises 279 residues: S-methyl-5'-thioadenosine phosphorylase (279 aa).

Phosphate contacts are provided by residues serine 28, 70 to 71, and 103 to 104; these read RH and SA. Methionine 202 contacts substrate. Threonine 203 is a binding site for phosphate. Residue 226–228 participates in substrate binding; it reads DYD.

The protein belongs to the PNP/MTAP phosphorylase family. MTAP subfamily. As to quaternary structure, homohexamer. Dimer of a homotrimer.

The catalysed reaction is S-methyl-5'-thioadenosine + phosphate = 5-(methylsulfanyl)-alpha-D-ribose 1-phosphate + adenine. The protein operates within amino-acid biosynthesis; L-methionine biosynthesis via salvage pathway; S-methyl-5-thio-alpha-D-ribose 1-phosphate from S-methyl-5'-thioadenosine (phosphorylase route): step 1/1. Catalyzes the reversible phosphorylation of S-methyl-5'-thioadenosine (MTA) to adenine and 5-methylthioribose-1-phosphate. Involved in the breakdown of MTA, a major by-product of polyamine biosynthesis. Responsible for the first step in the methionine salvage pathway after MTA has been generated from S-adenosylmethionine. Has broad substrate specificity with 6-aminopurine nucleosides as preferred substrates. In Pyrobaculum aerophilum (strain ATCC 51768 / DSM 7523 / JCM 9630 / CIP 104966 / NBRC 100827 / IM2), this protein is S-methyl-5'-thioadenosine phosphorylase.